Consider the following 93-residue polypeptide: Cytochrome c (93 aa).

Residues 1–13 show a composition bias toward low complexity; the sequence is AALPPGDAAAAQG. Residues 1–21 are disordered; it reads AALPPGDAAAAQGGSNGVGPN. Met70 provides a ligand contact to heme c.

It belongs to the cytochrome c family. Binds 1 heme c group covalently per subunit.

It localises to the mitochondrion intermembrane space. Functionally, electron carrier protein. The oxidized form of the cytochrome c heme group can accept an electron from the heme group of the cytochrome c1 subunit of cytochrome reductase. Cytochrome c then transfers this electron to the cytochrome oxidase complex, the final protein carrier in the mitochondrial electron-transport chain. This is Cytochrome c from Trypanosoma brucei brucei.